The chain runs to 758 residues: Inhibitor of nuclear factor kappa-B kinase subunit alpha (758 aa).

A Protein kinase domain is found at 15–301 (WVMKERLGTG…LNTDSKQPQC (287 aa)). ATP-binding positions include 21–29 (LGTGGFGHV) and Lys44. Residue Asp145 is the Proton acceptor of the active site. Residues 456–477 (LLRFNTNLTRYKNMMFSFSQQL) are leucine-zipper. Positions 741 to 746 (QDWSWT) are NEMO-binding.

The protein belongs to the protein kinase superfamily. Ser/Thr protein kinase family. I-kappa-B kinase subfamily. In terms of assembly, directly interacts with ikbkg/nemo.

Its subcellular location is the cytoplasm. The protein localises to the nucleus. It catalyses the reaction L-seryl-[I-kappa-B protein] + ATP = O-phospho-L-seryl-[I-kappa-B protein] + ADP + H(+). Activated when phosphorylated and inactivated when dephosphorylated. In terms of biological role, phosphorylates inhibitors of NF-kappa-B thus leading to the dissociation of the inhibitor/NF-kappa-B complex and ultimately the degradation of the inhibitor. Phosphorylates 'Ser-10' of histone H3 at NF-kappa-B-regulated promoters during inflammatory responses triggered by cytokines. The chain is Inhibitor of nuclear factor kappa-B kinase subunit alpha (chuk) from Danio rerio (Zebrafish).